A 132-amino-acid polypeptide reads, in one-letter code: Small ribosomal subunit protein uS8 (132 aa).

The protein belongs to the universal ribosomal protein uS8 family. As to quaternary structure, part of the 30S ribosomal subunit. Contacts proteins S5 and S12.

Functionally, one of the primary rRNA binding proteins, it binds directly to 16S rRNA central domain where it helps coordinate assembly of the platform of the 30S subunit. The protein is Small ribosomal subunit protein uS8 of Mycoplasmopsis synoviae (strain 53) (Mycoplasma synoviae).